Here is a 1347-residue protein sequence, read N- to C-terminus: Spermatogenesis-associated protein 31A1 (1347 aa).

A helical membrane pass occupies residues 23-43; the sequence is PWVLDIFLTLVFALGFFFLLL. Disordered stretches follow at residues 55–89, 106–235, 373–397, 628–658, 899–955, and 1085–1160; these read PSPS…ECPR, GPHL…STLI, EQDT…GPQK, DESP…EAQK, PRGI…REAV, and HEEP…PPSV. Over residues 60–82 the composition is skewed to basic residues; sequence GKRKCPVGRRRRPRGRMKNHSLR. Positions 165 to 178 are enriched in polar residues; the sequence is LASTPSPGPMTTSV. Residues 198–222 are compositionally biased toward pro residues; that stretch reads PEPPALFPHPPHTPDPLACSPPPPK. Polar residues-rich tracts occupy residues 631–651 and 927–948; these read PGTS…STGE and LTYS…SSKA. 2 stretches are compositionally biased toward basic and acidic residues: residues 1108-1127 and 1137-1146; these read HKSE…RLEG and RKTEDTHQDE.

It belongs to the SPATA31 family.

The protein resides in the membrane. Functionally, may play a role in spermatogenesis. The protein is Spermatogenesis-associated protein 31A1 of Homo sapiens (Human).